The sequence spans 458 residues: tRNA modification GTPase MnmE (458 aa).

Residues Arg-23, Glu-87, and Arg-126 each coordinate (6S)-5-formyl-5,6,7,8-tetrahydrofolate. The region spanning 224 to 380 (GLSMVIVGKP…LKSKIKDLFF (157 aa)) is the TrmE-type G domain. A K(+)-binding site is contributed by Asn-234. Residues 234 to 239 (NVGKSS), 253 to 259 (TDIAGTT), and 278 to 281 (DTAG) contribute to the GTP site. Residue Ser-238 participates in Mg(2+) binding. The K(+) site is built by Thr-253, Ile-255, and Thr-258. Thr-259 serves as a coordination point for Mg(2+). Lys-458 provides a ligand contact to (6S)-5-formyl-5,6,7,8-tetrahydrofolate.

The protein belongs to the TRAFAC class TrmE-Era-EngA-EngB-Septin-like GTPase superfamily. TrmE GTPase family. Homodimer. Heterotetramer of two MnmE and two MnmG subunits. K(+) serves as cofactor.

It is found in the cytoplasm. Functionally, exhibits a very high intrinsic GTPase hydrolysis rate. Involved in the addition of a carboxymethylaminomethyl (cmnm) group at the wobble position (U34) of certain tRNAs, forming tRNA-cmnm(5)s(2)U34. This chain is tRNA modification GTPase MnmE, found in Clostridium perfringens (strain ATCC 13124 / DSM 756 / JCM 1290 / NCIMB 6125 / NCTC 8237 / Type A).